Consider the following 394-residue polypeptide: NAD(P)H-quinone oxidoreductase subunit H (394 aa).

The protein belongs to the complex I 49 kDa subunit family. NDH-1 can be composed of about 15 different subunits; different subcomplexes with different compositions have been identified which probably have different functions.

The protein localises to the cellular thylakoid membrane. The enzyme catalyses a plastoquinone + NADH + (n+1) H(+)(in) = a plastoquinol + NAD(+) + n H(+)(out). The catalysed reaction is a plastoquinone + NADPH + (n+1) H(+)(in) = a plastoquinol + NADP(+) + n H(+)(out). In terms of biological role, NDH-1 shuttles electrons from an unknown electron donor, via FMN and iron-sulfur (Fe-S) centers, to quinones in the respiratory and/or the photosynthetic chain. The immediate electron acceptor for the enzyme in this species is believed to be plastoquinone. Couples the redox reaction to proton translocation, and thus conserves the redox energy in a proton gradient. Cyanobacterial NDH-1 also plays a role in inorganic carbon-concentration. This is NAD(P)H-quinone oxidoreductase subunit H from Prochlorococcus marinus (strain MIT 9313).